A 256-amino-acid chain; its full sequence is MLNIGPFSFHSRLLLGTGKFPDFDVQQKAIDVSEAEVLTFAVRRMDIFDAKQPNLLEKLDVKKYTLLPNTAGAKNAEEAVRIAKLAKASGLCDMIKVEVIGDDRTLLPDPVETLKASEMLLEEGFIVLPYTSDDVVLARKLQELGVHAIMPGASPIGSGLGIVNPLNLSFIIEQATVPVIVDAGVGSPADAAFAMELGADGVLLNTAVSGAKDPIKMAQAMKLSIEAGRLGFEAGRIARKRCATASSPLEGMSVVE.

Residue Lys96 is the Schiff-base intermediate with DXP of the active site. 1-deoxy-D-xylulose 5-phosphate-binding positions include Gly157, 183-184 (AG), and 205-206 (NT).

Belongs to the ThiG family. As to quaternary structure, homotetramer. Forms heterodimers with either ThiH or ThiS.

Its subcellular location is the cytoplasm. The catalysed reaction is [ThiS sulfur-carrier protein]-C-terminal-Gly-aminoethanethioate + 2-iminoacetate + 1-deoxy-D-xylulose 5-phosphate = [ThiS sulfur-carrier protein]-C-terminal Gly-Gly + 2-[(2R,5Z)-2-carboxy-4-methylthiazol-5(2H)-ylidene]ethyl phosphate + 2 H2O + H(+). It functions in the pathway cofactor biosynthesis; thiamine diphosphate biosynthesis. In terms of biological role, catalyzes the rearrangement of 1-deoxy-D-xylulose 5-phosphate (DXP) to produce the thiazole phosphate moiety of thiamine. Sulfur is provided by the thiocarboxylate moiety of the carrier protein ThiS. In vitro, sulfur can be provided by H(2)S. The polypeptide is Thiazole synthase (Bacillus cereus (strain 03BB102)).